An 887-amino-acid polypeptide reads, in one-letter code: Beta-galactosidase 9 (887 aa).

The N-terminal stretch at 1-30 is a signal peptide; that stretch reads MAESIRTFSLQWRILSLIIALLVYFPILSG. N-linked (GlcNAc...) asparagine glycosylation is present at Asn37. Catalysis depends on Glu194, which acts as the Proton donor. Residue Glu263 is the Nucleophile of the active site. Asn463, Asn485, Asn496, Asn527, and Asn785 each carry an N-linked (GlcNAc...) asparagine glycan. Residues 791 to 877 enclose the SUEL-type lectin domain; that stretch reads NSVAPEVHLH…KTLAVMSRCS (87 aa). Asn881 carries an N-linked (GlcNAc...) asparagine glycan.

This sequence belongs to the glycosyl hydrolase 35 family. Ubiquitous, with higher expression levels in siliques.

Its subcellular location is the secreted. The protein resides in the extracellular space. It localises to the apoplast. The enzyme catalyses Hydrolysis of terminal non-reducing beta-D-galactose residues in beta-D-galactosides.. The polypeptide is Beta-galactosidase 9 (BGAL9) (Arabidopsis thaliana (Mouse-ear cress)).